The primary structure comprises 274 residues: MEPILQESDSRFVIFPIKYHDIWKMYKQSVASFWTVEEVDLSKDLDDWDKLTKDEKYFIKHILAFFASSDGIVNENLAERFYVDVQCSEARCFYGFQIAMENIHSEMYSLLIDTYVRDNIEKMHLFNAIETMECVKKKADWARKWISSNKVYGERVVAFAAVEGIFFSGSFAAIFWIKKRGLMPGLTFSNELISRDEGLHCDFACLMFKHLLHPPSKEVITSIIIDAVNIEKEFLTVAIPVDLIGMNCCLMSQYIEFVADRLLTELGCEKSQCI.

Positions 70, 101, and 104 each coordinate Fe cation. The active site involves Tyr108. Residues Glu163, Glu197, and His200 each contribute to the Fe cation site.

The protein belongs to the ribonucleoside diphosphate reductase small chain family. As to quaternary structure, heterodimer of a large and a small chain. The cofactor is Fe cation.

It carries out the reaction a 2'-deoxyribonucleoside 5'-diphosphate + [thioredoxin]-disulfide + H2O = a ribonucleoside 5'-diphosphate + [thioredoxin]-dithiol. Ribonucleoside-diphosphate reductase holoenzyme provides the precursors necessary for viral DNA synthesis. Allows virus growth in non-dividing cells. Catalyzes the biosynthesis of deoxyribonucleotides from the corresponding ribonucleotides. This is Ribonucleoside-diphosphate reductase small chain from Sus scrofa (Pig).